The chain runs to 375 residues: Fluoride export protein 2 (375 aa).

Topologically, residues methionine 1–lysine 11 are cytoplasmic. Residues leucine 12–threonine 32 form a helical membrane-spanning segment. The Extracellular portion of the chain corresponds to arginine 33 to glutamine 34. The chain crosses the membrane as a helical span at residues alanine 35–serine 55. The Cytoplasmic portion of the chain corresponds to asparagine 56–glutamine 79. The chain crosses the membrane as a helical span at residues valine 80 to leucine 100. Topologically, residues leucine 101–glycine 127 are extracellular. Residues asparagine 109 and asparagine 117 are each glycosylated (N-linked (GlcNAc...) asparagine). Residues isoleucine 128 to phenylalanine 148 form a helical membrane-spanning segment. Over glycine 149–lysine 213 the chain is Cytoplasmic. The chain crosses the membrane as a helical span at residues leucine 214–glutamate 234. Asparagine 235 carries an N-linked (GlcNAc...) asparagine glycan. At asparagine 235–tryptophan 241 the chain is on the extracellular side. Residues threonine 242–phenylalanine 262 traverse the membrane as a helical segment. The Cytoplasmic segment spans residues asparagine 263 to lysine 268. A helical membrane pass occupies residues phenylalanine 269–methionine 289. The Extracellular segment spans residues valine 290–cysteine 310. The chain crosses the membrane as a helical span at residues histidine 311–isoleucine 331. The Cytoplasmic segment spans residues asparagine 332–serine 338. A helical membrane pass occupies residues phenylalanine 339–isoleucine 359. Residues threonine 360–cysteine 375 are Extracellular-facing.

The protein belongs to the fluoride channel Fluc/FEX (TC 1.A.43) family.

It is found in the cell membrane. It catalyses the reaction fluoride(in) = fluoride(out). Fluoride channel required for the rapid expulsion of cytoplasmic fluoride. The sequence is that of Fluoride export protein 2 from Saccharomyces cerevisiae (strain ATCC 204508 / S288c) (Baker's yeast).